A 541-amino-acid polypeptide reads, in one-letter code: Thioredoxin reductase (541 aa).

FAD-binding positions include 51 to 52 (PG), 71 to 74 (DYVK), 87 to 88 (TC), 92 to 96 (GCVPK), Ala-161, Asp-357, and 364 to 366 (ELA). Residues Cys-88 and Cys-93 are joined by a disulfide bond. The loop important for the interaction with TRX1 stretch occupies residues 438-452 (HRQKHIRAQKDEYDL). His-509 contacts FAD. His-509 (proton acceptor) is an active-site residue. An intrachain disulfide couples Cys-535 to Cys-540.

The protein belongs to the class-I pyridine nucleotide-disulfide oxidoreductase family. Homodimer. It depends on FAD as a cofactor.

It localises to the cytoplasm. The catalysed reaction is [thioredoxin]-dithiol + NADP(+) = [thioredoxin]-disulfide + NADPH + H(+). Its function is as follows. Catalyzes the transfer of electrons from NADPH to thioredoxins TRX1, TRX2 and TRX3, which in turn act as reductants of disulfide containing proteins. Able to reduce nitroglutathione (GSNO), a compound involved in the transport of nitric oxide (NO); however, TRX1 is more efficient in reducing GSNO. Has no catalytic activity towards oxidized glutathione (GSSG). The protein is Thioredoxin reductase of Plasmodium falciparum (isolate FCH-5).